We begin with the raw amino-acid sequence, 220 residues long: Fructose-6-phosphate aldolase 1 (220 aa).

Lys-85 (schiff-base intermediate with substrate) is an active-site residue.

It belongs to the transaldolase family. Type 3A subfamily. Homodecamer. Five subunits are arranged as a pentamer, and two ring-like pentamers pack like a donut to form the decamer.

Its subcellular location is the cytoplasm. The enzyme catalyses beta-D-fructose 6-phosphate = dihydroxyacetone + D-glyceraldehyde 3-phosphate. Its activity is regulated as follows. Inhibited by glycerol, inorganic phosphate and arabinose 5-phosphate. Its function is as follows. Catalyzes the reversible formation of fructose 6-phosphate from dihydroxyacetone (DHA) and D-glyceraldehyde 3-phosphate via an aldolization reaction. Can utilize several aldehydes as acceptor compounds in vitro, and hydroxyacetone (HA) or 1-hydroxy-butan-2-one as alternative donor substrate. Is also able to catalyze the direct stereoselective self-aldol addition of glycolaldehyde to furnish D-(-)-threose, and cross-aldol reactions of glycolaldehyde to other aldehyde acceptors. Is not able to cleave fructose, fructose 1-phosphate, glucose 6-phosphate, sedoheptulose 1,7-bisphosphate, xylulose 5-phosphate, ribulose 5-phosphate, and fructose 1,6-bisphosphate; cannot use dihydroxyacetone phosphate as donor compound nor D-glyceraldehyde as acceptor. Does not display transaldolase activity. In Escherichia coli (strain K12), this protein is Fructose-6-phosphate aldolase 1 (fsaA).